We begin with the raw amino-acid sequence, 439 residues long: Xylose isomerase (439 aa).

Residues His101 and Asp104 contribute to the active site. Glu232, Glu268, His271, Asp296, Asp307, Asp309, and Asp339 together coordinate Mg(2+).

It belongs to the xylose isomerase family. In terms of assembly, homotetramer. Mg(2+) is required as a cofactor.

It is found in the cytoplasm. The enzyme catalyses alpha-D-xylose = alpha-D-xylulofuranose. This chain is Xylose isomerase, found in Yersinia pestis bv. Antiqua (strain Angola).